The following is a 155-amino-acid chain: Ribosomal RNA large subunit methyltransferase H (155 aa).

Residues Leu-73, Gly-104, and Leu-123–Leu-128 contribute to the S-adenosyl-L-methionine site.

This sequence belongs to the RNA methyltransferase RlmH family. In terms of assembly, homodimer.

The protein localises to the cytoplasm. The enzyme catalyses pseudouridine(1915) in 23S rRNA + S-adenosyl-L-methionine = N(3)-methylpseudouridine(1915) in 23S rRNA + S-adenosyl-L-homocysteine + H(+). Its function is as follows. Specifically methylates the pseudouridine at position 1915 (m3Psi1915) in 23S rRNA. The protein is Ribosomal RNA large subunit methyltransferase H of Pseudomonas aeruginosa (strain UCBPP-PA14).